Here is a 305-residue protein sequence, read N- to C-terminus: 2-oxoacid:ferredoxin oxidoreductase subunit beta (305 aa).

[4Fe-4S] cluster is bound by residues C12, C15, and C46. Residues 44–47 and H65 each bind thiamine diphosphate; that span reads IGCS. D90 is a binding site for Mg(2+). 91–92 contacts thiamine diphosphate; it reads GD. 2 residues coordinate Mg(2+): N118 and V120. 122 to 123 lines the thiamine diphosphate pocket; it reads GL. Residue C197 coordinates [4Fe-4S] cluster.

Heterodimer composed of an alpha and a beta subunit. It depends on [4Fe-4S] cluster as a cofactor. Thiamine diphosphate is required as a cofactor. The cofactor is Mg(2+).

It localises to the cytoplasm. The enzyme catalyses a 2-oxocarboxylate + 2 oxidized [2Fe-2S]-[ferredoxin] + CoA = an acyl-CoA + 2 reduced [2Fe-2S]-[ferredoxin] + CO2 + H(+). Catalyzes the coenzyme A-dependent oxidative decarboxylation of different 2-oxoacids such as 2-oxoglutarate, pyruvate and 2-oxobutyrate to form their CoA derivatives. This chain is 2-oxoacid:ferredoxin oxidoreductase subunit beta, found in Sulfolobus sp.